The sequence spans 298 residues: ATP synthase gamma chain (298 aa).

It belongs to the ATPase gamma chain family. As to quaternary structure, F-type ATPases have 2 components, CF(1) - the catalytic core - and CF(0) - the membrane proton channel. CF(1) has five subunits: alpha(3), beta(3), gamma(1), delta(1), epsilon(1). CF(0) has three main subunits: a, b and c.

The protein localises to the cell membrane. Produces ATP from ADP in the presence of a proton gradient across the membrane. The gamma chain is believed to be important in regulating ATPase activity and the flow of protons through the CF(0) complex. The polypeptide is ATP synthase gamma chain (Mycobacterium leprae (strain Br4923)).